A 169-amino-acid chain; its full sequence is S-ribosylhomocysteine lyase (169 aa).

3 residues coordinate Fe cation: histidine 54, histidine 58, and cysteine 128.

The protein belongs to the LuxS family. In terms of assembly, homodimer. Requires Fe cation as cofactor.

The enzyme catalyses S-(5-deoxy-D-ribos-5-yl)-L-homocysteine = (S)-4,5-dihydroxypentane-2,3-dione + L-homocysteine. Functionally, involved in the synthesis of autoinducer 2 (AI-2) which is secreted by bacteria and is used to communicate both the cell density and the metabolic potential of the environment. The regulation of gene expression in response to changes in cell density is called quorum sensing. Catalyzes the transformation of S-ribosylhomocysteine (RHC) to homocysteine (HC) and 4,5-dihydroxy-2,3-pentadione (DPD). This chain is S-ribosylhomocysteine lyase, found in Psychromonas ingrahamii (strain DSM 17664 / CCUG 51855 / 37).